A 178-amino-acid chain; its full sequence is Large ribosomal subunit protein bL25 (178 aa).

It belongs to the bacterial ribosomal protein bL25 family. CTC subfamily. In terms of assembly, part of the 50S ribosomal subunit; part of the 5S rRNA/L5/L18/L25 subcomplex. Contacts the 5S rRNA. Binds to the 5S rRNA independently of L5 and L18.

Its function is as follows. This is one of the proteins that binds to the 5S RNA in the ribosome where it forms part of the central protuberance. The chain is Large ribosomal subunit protein bL25 from Helicobacter pylori (strain Shi470).